A 231-amino-acid chain; its full sequence is Transmembrane gamma-carboxyglutamic acid protein 3 (231 aa).

A propeptide spanning residues 1–19 is cleaved from the precursor; it reads MAVFLEAKDAHSVLKRFPR. A Gla domain is found at 20 to 65; the sequence is ANEFLEELRQGTIERECMEEICSYEEVKEVFENKEKTMEFWKGYPN. Residues 20–78 are Extracellular-facing; sequence ANEFLEELRQGTIERECMEEICSYEEVKEVFENKEKTMEFWKGYPNAVYSVRDPSQSSD. Residues glutamate 22, glutamate 25, glutamate 26, glutamate 33, glutamate 35, glutamate 38, glutamate 39, glutamate 44, glutamate 45, glutamate 48, glutamate 51, glutamate 54, and glutamate 58 each carry the 4-carboxyglutamate modification. The cysteines at positions 36 and 41 are disulfide-linked. A helical transmembrane segment spans residues 79-101; it reads AMYVVVPLLGVALLIVIALFIIW. Residues 102 to 231 lie on the Cytoplasmic side of the membrane; sequence RCQLQKATRH…IVAANPGADK (130 aa). 2 disordered regions span residues 140–165 and 182–231; these read HSQG…SRGG and LSRL…GADK. Positions 202 to 213 are enriched in low complexity; that stretch reads ESSSEEASVSYS.

Gla residues are produced after subsequent post-translational modifications of glutamate by a vitamin K-dependent gamma-carboxylase. Expressed in brain, lung, kidney and heart.

Its subcellular location is the membrane. The protein is Transmembrane gamma-carboxyglutamic acid protein 3 (PRRG3) of Homo sapiens (Human).